Reading from the N-terminus, the 681-residue chain is Potassium-transporting ATPase ATP-binding subunit (681 aa).

A run of 4 helical transmembrane segments spans residues 30 to 50 (LLVY…FFGI), 59 to 79 (LAIA…EAIA), 216 to 236 (ILLV…LPFT), and 255 to 275 (IALL…SIGI). The active-site 4-aspartylphosphate intermediate is the D306. ATP is bound by residues D343, E347, 376 to 383 (FTATTRMS), and K394. D517 and D521 together coordinate Mg(2+). 3 consecutive transmembrane segments (helical) span residues 587–607 (FAII…LNLM), 615–635 (AILS…PLSL), and 661–681 (LIAP…LGIV).

Belongs to the cation transport ATPase (P-type) (TC 3.A.3) family. Type IA subfamily. As to quaternary structure, the system is composed of three essential subunits: KdpA, KdpB and KdpC.

Its subcellular location is the cell membrane. It catalyses the reaction K(+)(out) + ATP + H2O = K(+)(in) + ADP + phosphate + H(+). Part of the high-affinity ATP-driven potassium transport (or Kdp) system, which catalyzes the hydrolysis of ATP coupled with the electrogenic transport of potassium into the cytoplasm. This subunit is responsible for energy coupling to the transport system and for the release of the potassium ions to the cytoplasm. The protein is Potassium-transporting ATPase ATP-binding subunit of Listeria monocytogenes serotype 4a (strain HCC23).